Consider the following 50-residue polypeptide: Toxic protein HokC (50 aa).

The Cytoplasmic portion of the chain corresponds to 1 to 5 (MKQHK). Residues 6 to 24 (AMIVALIVICITAVVAALV) traverse the membrane as a helical; Signal-anchor for type II membrane protein segment. The Periplasmic segment spans residues 25-50 (TRKDLCEVHIRTGQTEVAVFTAYESE).

This sequence belongs to the Hok/Gef family. Homodimer; disulfide-linked.

The protein localises to the cell inner membrane. Toxic component of a type I toxin-antitoxin (TA) system. When overexpressed kills cells within minutes; causes collapse of the transmembrane potential and arrest of respiration. Its toxic effect is probably neutralized by antisense antitoxin RNA SokC. This is Toxic protein HokC from Escherichia coli (strain K12).